Reading from the N-terminus, the 276-residue chain is RNA-binding protein pno-1 (276 aa).

2 disordered regions span residues 1–30 (MATS…VPST) and 62–101 (DVVM…SRVV). Residues 8-27 (FDDEFPMEEGMPELLDDEDV) show a composition bias toward acidic residues. Residues 197-249 (GDHVSRAIGRIAGKDGRTKLVIENTTKTRIVVANTKIHILGAYQNLKLARNAV) enclose the KH domain.

It belongs to the PNO1 family. As to quaternary structure, part of the small subunit (SSU) processome, composed of more than 70 proteins and the RNA chaperone small nucleolar RNA (snoRNA) U3.

The protein resides in the nucleus. It localises to the nucleolus. Functionally, part of the small subunit (SSU) processome, first precursor of the small eukaryotic ribosomal subunit. During the assembly of the SSU processome in the nucleolus, many ribosome biogenesis factors, an RNA chaperone and ribosomal proteins associate with the nascent pre-rRNA and work in concert to generate RNA folding, modifications, rearrangements and cleavage as well as targeted degradation of pre-ribosomal RNA by the RNA exosome. Positively regulates dimethylation of two adjacent adenosines in the loop of a conserved hairpin near the 3'-end of 18S rRNA. This Caenorhabditis briggsae protein is RNA-binding protein pno-1.